The chain runs to 288 residues: MSKLGNRADWADDEEFDDPSALPPQQITTNKDGTKTIVSYRFNDEGKKVKVTRRIKTTVVREHVNPQVAERRSWAKFGLEKGNAPGPSFDTTSVGENIVFRPSVNWKLQAAEAEKNGGEKGSVKDQLKDKKVKCRICSGEHFTARCPFKDTMAPVDEPTAGGEAGDEDSPAAGALGAGTSSYVPPHLRKGAAGGGERMAGKYEKDDLATLRVTNVSELAEEGELRDLFERFGRVTRVFLARDRETQRAKGFAFISFADRSDAARACEKMDGFGYRHLILRVEFAKRAT.

Disordered stretches follow at residues 1–33 and 156–197; these read MSKL…NKDG and DEPT…GGER. The RRM domain maps to 208 to 286; it reads ATLRVTNVSE…LILRVEFAKR (79 aa).

It belongs to the eIF-3 subunit G family. Component of the eukaryotic translation initiation factor 3 (eIF-3) complex.

It localises to the cytoplasm. Its function is as follows. RNA-binding component of the eukaryotic translation initiation factor 3 (eIF-3) complex, which is involved in protein synthesis of a specialized repertoire of mRNAs and, together with other initiation factors, stimulates binding of mRNA and methionyl-tRNAi to the 40S ribosome. The eIF-3 complex specifically targets and initiates translation of a subset of mRNAs involved in cell proliferation. This subunit can bind 18S rRNA. This Aspergillus niger (strain ATCC MYA-4892 / CBS 513.88 / FGSC A1513) protein is Eukaryotic translation initiation factor 3 subunit G (tif35).